The primary structure comprises 303 residues: Suppressor of silencing P0 (303 aa).

This sequence belongs to the polerovirus P0 protein family.

Functionally, suppressor of RNA-mediated gene silencing. In Pea enation mosaic virus-1 (strain WSG) (PEMV-1), this protein is Suppressor of silencing P0.